The following is a 696-amino-acid chain: Polyribonucleotide nucleotidyltransferase (696 aa).

Mg(2+)-binding residues include Asp483 and Asp489. The region spanning 550-609 is the KH domain; that stretch reads PRITTIWVKVDKIRDVIGSGGKNIRSVTEATGVSIDIDDTGKINIASTNKEACDLAIKMI. Positions 619–687 constitute an S1 motif domain; that stretch reads GKLYMGTVKK…KQGKIKLSRK (69 aa).

Belongs to the polyribonucleotide nucleotidyltransferase family. Requires Mg(2+) as cofactor.

The protein resides in the cytoplasm. The enzyme catalyses RNA(n+1) + phosphate = RNA(n) + a ribonucleoside 5'-diphosphate. Its function is as follows. Involved in mRNA degradation. Catalyzes the phosphorolysis of single-stranded polyribonucleotides processively in the 3'- to 5'-direction. This chain is Polyribonucleotide nucleotidyltransferase, found in Geobacter sp. (strain M21).